A 494-amino-acid polypeptide reads, in one-letter code: Uric acid degradation bifunctional protein PucL (494 aa).

Residues 1 to 174 form an OHCU decarboxylase region; it reads MFTMDDLNQM…EKGETQMKRT (174 aa). The active-site Proton donor; for OHCU decarboxylase activity is the His68. 5-hydroxy-2-oxo-4-ureido-2,5-dihydro-1H-imidazole-5-carboxylate-binding positions include Pro69, 81–85, and 116–120; these read SVREQ and FILAV. The tract at residues 175–494 is urate oxidase; it reads MSYGKGNVFA…AAEKCRSLKA (320 aa). Residue Lys179 is the Charge relay system; for urate oxidase activity of the active site. Lys190 (charge relay system) is an active-site residue. Residue Thr239 is the Charge relay system; for urate oxidase activity of the active site. The urate site is built by Thr239, Asp240, Phe349, Arg366, Ile414, Gln415, and Asn441.

It in the N-terminal section; belongs to the OHCU decarboxylase family. The protein in the C-terminal section; belongs to the uricase family.

The enzyme catalyses 5-hydroxy-2-oxo-4-ureido-2,5-dihydro-1H-imidazole-5-carboxylate + H(+) = (S)-allantoin + CO2. It carries out the reaction urate + O2 + H2O = 5-hydroxyisourate + H2O2. It participates in purine metabolism; urate degradation; (S)-allantoin from urate: step 1/3. Its pathway is purine metabolism; urate degradation; (S)-allantoin from urate: step 3/3. Its function is as follows. Catalyzes two steps in the degradation of uric acid, i.e. the oxidation of uric acid to 5-hydroxyisourate (HIU) and the stereoselective decarboxylation of 2-oxo-4-hydroxy-4-carboxy-5-ureidoimidazoline (OHCU) to (S)-allantoin. The protein is Uric acid degradation bifunctional protein PucL (pucL) of Bacillus subtilis (strain 168).